The sequence spans 425 residues: Serine hydroxymethyltransferase (425 aa).

Residues Leu124 and 128–130 (GHL) each bind (6S)-5,6,7,8-tetrahydrofolate. N6-(pyridoxal phosphate)lysine is present on Lys233.

Belongs to the SHMT family. As to quaternary structure, homodimer. It depends on pyridoxal 5'-phosphate as a cofactor.

It is found in the cytoplasm. It catalyses the reaction (6R)-5,10-methylene-5,6,7,8-tetrahydrofolate + glycine + H2O = (6S)-5,6,7,8-tetrahydrofolate + L-serine. It participates in one-carbon metabolism; tetrahydrofolate interconversion. Its pathway is amino-acid biosynthesis; glycine biosynthesis; glycine from L-serine: step 1/1. Its function is as follows. Catalyzes the reversible interconversion of serine and glycine with tetrahydrofolate (THF) serving as the one-carbon carrier. This reaction serves as the major source of one-carbon groups required for the biosynthesis of purines, thymidylate, methionine, and other important biomolecules. Also exhibits THF-independent aldolase activity toward beta-hydroxyamino acids, producing glycine and aldehydes, via a retro-aldol mechanism. The chain is Serine hydroxymethyltransferase from Clavibacter sepedonicus (Clavibacter michiganensis subsp. sepedonicus).